The sequence spans 230 residues: Protein-L-isoaspartate O-methyltransferase (230 aa).

Residue serine 68 is part of the active site.

It belongs to the methyltransferase superfamily. L-isoaspartyl/D-aspartyl protein methyltransferase family.

Its subcellular location is the cytoplasm. The enzyme catalyses [protein]-L-isoaspartate + S-adenosyl-L-methionine = [protein]-L-isoaspartate alpha-methyl ester + S-adenosyl-L-homocysteine. Catalyzes the methyl esterification of L-isoaspartyl residues in peptides and proteins that result from spontaneous decomposition of normal L-aspartyl and L-asparaginyl residues. It plays a role in the repair and/or degradation of damaged proteins. The protein is Protein-L-isoaspartate O-methyltransferase of Salinibacter ruber (strain DSM 13855 / M31).